Reading from the N-terminus, the 1035-residue chain is Glycine dehydrogenase (decarboxylating), mitochondrial (1035 aa).

Residues 1 to 64 constitute a mitochondrion transit peptide; that stretch reads MERARKLANR…KSFNTQQARS (64 aa). Lysine 771 carries the N6-(pyridoxal phosphate)lysine modification.

It belongs to the GcvP family. As to quaternary structure, homodimer. The glycine cleavage system is composed of four proteins: P, T, L and H. The cofactor is pyridoxal 5'-phosphate.

It is found in the mitochondrion. The catalysed reaction is N(6)-[(R)-lipoyl]-L-lysyl-[glycine-cleavage complex H protein] + glycine + H(+) = N(6)-[(R)-S(8)-aminomethyldihydrolipoyl]-L-lysyl-[glycine-cleavage complex H protein] + CO2. Its function is as follows. The glycine cleavage system catalyzes the degradation of glycine. The P protein binds the alpha-amino group of glycine through its pyridoxal phosphate cofactor; CO(2) is released and the remaining methylamine moiety is then transferred to the lipoamide cofactor of the H protein. The polypeptide is Glycine dehydrogenase (decarboxylating), mitochondrial (GDCSP) (Solanum tuberosum (Potato)).